The chain runs to 345 residues: Probable dual-specificity RNA methyltransferase RlmN (345 aa).

The active-site Proton acceptor is the Glu-93. The Radical SAM core domain maps to 99–326 (DDERATLCIS…TTIRASRGED (228 aa)). Residues Cys-106 and Cys-331 are joined by a disulfide bond. 3 residues coordinate [4Fe-4S] cluster: Cys-113, Cys-117, and Cys-120. Residues 158-159 (GE), Ser-190, 212-214 (SLH), and His-288 contribute to the S-adenosyl-L-methionine site. Cys-331 serves as the catalytic S-methylcysteine intermediate.

This sequence belongs to the radical SAM superfamily. RlmN family. [4Fe-4S] cluster serves as cofactor.

The protein localises to the cytoplasm. The catalysed reaction is adenosine(2503) in 23S rRNA + 2 reduced [2Fe-2S]-[ferredoxin] + 2 S-adenosyl-L-methionine = 2-methyladenosine(2503) in 23S rRNA + 5'-deoxyadenosine + L-methionine + 2 oxidized [2Fe-2S]-[ferredoxin] + S-adenosyl-L-homocysteine. It carries out the reaction adenosine(37) in tRNA + 2 reduced [2Fe-2S]-[ferredoxin] + 2 S-adenosyl-L-methionine = 2-methyladenosine(37) in tRNA + 5'-deoxyadenosine + L-methionine + 2 oxidized [2Fe-2S]-[ferredoxin] + S-adenosyl-L-homocysteine. Its function is as follows. Specifically methylates position 2 of adenine 2503 in 23S rRNA and position 2 of adenine 37 in tRNAs. The sequence is that of Probable dual-specificity RNA methyltransferase RlmN from Bacteroides thetaiotaomicron (strain ATCC 29148 / DSM 2079 / JCM 5827 / CCUG 10774 / NCTC 10582 / VPI-5482 / E50).